A 159-amino-acid polypeptide reads, in one-letter code: Ribosomal RNA large subunit methyltransferase H (159 aa).

S-adenosyl-L-methionine is bound by residues L76, G108, and 127-132 (FGLLTF).

It belongs to the RNA methyltransferase RlmH family. As to quaternary structure, homodimer.

It localises to the cytoplasm. The catalysed reaction is pseudouridine(1915) in 23S rRNA + S-adenosyl-L-methionine = N(3)-methylpseudouridine(1915) in 23S rRNA + S-adenosyl-L-homocysteine + H(+). Specifically methylates the pseudouridine at position 1915 (m3Psi1915) in 23S rRNA. This Streptococcus thermophilus (strain ATCC BAA-491 / LMD-9) protein is Ribosomal RNA large subunit methyltransferase H.